We begin with the raw amino-acid sequence, 176 residues long: Orotate phosphoribosyltransferase (176 aa).

5-phospho-alpha-D-ribose 1-diphosphate-binding positions include Arg-90, Lys-91, Lys-94, and 116–124 (EDVTTTGGS). Positions 120 and 148 each coordinate orotate.

Belongs to the purine/pyrimidine phosphoribosyltransferase family. PyrE subfamily. Homodimer. Requires Mg(2+) as cofactor.

The catalysed reaction is orotidine 5'-phosphate + diphosphate = orotate + 5-phospho-alpha-D-ribose 1-diphosphate. It participates in pyrimidine metabolism; UMP biosynthesis via de novo pathway; UMP from orotate: step 1/2. Catalyzes the transfer of a ribosyl phosphate group from 5-phosphoribose 1-diphosphate to orotate, leading to the formation of orotidine monophosphate (OMP). This Methanocaldococcus jannaschii (strain ATCC 43067 / DSM 2661 / JAL-1 / JCM 10045 / NBRC 100440) (Methanococcus jannaschii) protein is Orotate phosphoribosyltransferase.